The following is a 208-amino-acid chain: Probable GTP-binding protein EngB (208 aa).

The EngB-type G domain maps to 23 to 205 (LTSEMVILGR…RQTLLKYLLT (183 aa)). Residues 31-38 (GRSNVGKS), 57-61 (GKTRL), 84-87 (DLPG), 154-157 (TKFD), and 182-184 (FNA) each bind GTP. Mg(2+) is bound by residues Ser38 and Thr59.

It belongs to the TRAFAC class TrmE-Era-EngA-EngB-Septin-like GTPase superfamily. EngB GTPase family. Mg(2+) serves as cofactor.

In terms of biological role, necessary for normal cell division and for the maintenance of normal septation. The chain is Probable GTP-binding protein EngB from Helicobacter pylori (strain HPAG1).